The sequence spans 290 residues: Zinc finger protein-like 1 homolog (290 aa).

The B box-type; degenerate zinc-finger motif lies at Met-1–Trp-43. The segment at Cys-53–Ser-101 adopts an RING-type; atypical zinc-finger fold. Positions Asn-156–Arg-168 are enriched in polar residues. Residues Asn-156–Ser-175 form a disordered region. Residues Trp-249 to Leu-269 traverse the membrane as a helical segment.

This sequence belongs to the ZFPL1 family.

The protein resides in the membrane. This Aedes aegypti (Yellowfever mosquito) protein is Zinc finger protein-like 1 homolog.